Consider the following 442-residue polypeptide: MSKTLYQKIYDSHIVYEDKNSESILYIDLHLLHEVTSPQAFDALRNKQRKVRQSRKTFATMDHNVSTTIQNISASGSMAQKQMEQLIKNCQEFNIPLYDINNPNQGIVHVIAPEKGMTLPGMTIVCGDSHTSTHGAFGALAFGIGTSEVEHVLATQTLKQKRFKNMKIEIIGEIPKFVTAKDIILFIIGKLGSSSGTGYVIEFCGDVIKNMSMEERMTICNMAIEMGAKSGLIAPDEITYKYLKNKIYSPSGLSWEKSLDHWKFLKSDKNAYFDKCVTVDISNLAPQITWGTNPDQVISIDEKIPDYNNINSAIKRESSKSACEYMGLQSNTYLTNISIDRVFIGSCTNARIEDLRSASKILKNKKIAKHVKAIVVPGSKLVKRQAEQEGLDRIFIDAGFEWRLPGCSMCLGMNKDRLHFGGRCASXSNRNFEGRQGRGGRT.

Positions 347, 407, and 410 each coordinate [4Fe-4S] cluster.

This sequence belongs to the aconitase/IPM isomerase family. LeuC type 1 subfamily. Heterodimer of LeuC and LeuD. [4Fe-4S] cluster is required as a cofactor.

The enzyme catalyses (2R,3S)-3-isopropylmalate = (2S)-2-isopropylmalate. The protein operates within amino-acid biosynthesis; L-leucine biosynthesis; L-leucine from 3-methyl-2-oxobutanoate: step 2/4. Its function is as follows. Catalyzes the isomerization between 2-isopropylmalate and 3-isopropylmalate, via the formation of 2-isopropylmaleate. The chain is 3-isopropylmalate dehydratase large subunit from Buchnera aphidicola subsp. Uroleucon solidaginis.